Here is a 233-residue protein sequence, read N- to C-terminus: 7-cyano-7-deazaguanine synthase 2 (233 aa).

8–18 (LSGGLDSTTCM) serves as a coordination point for ATP. Zn(2+)-binding residues include cysteine 186, cysteine 194, cysteine 197, and cysteine 200.

It belongs to the QueC family. Homodimer. The cofactor is Zn(2+).

It carries out the reaction 7-carboxy-7-deazaguanine + NH4(+) + ATP = 7-cyano-7-deazaguanine + ADP + phosphate + H2O + H(+). It participates in purine metabolism; 7-cyano-7-deazaguanine biosynthesis. Its function is as follows. Catalyzes the ATP-dependent conversion of 7-carboxy-7-deazaguanine (CDG) to 7-cyano-7-deazaguanine (preQ(0)). This chain is 7-cyano-7-deazaguanine synthase 2, found in Desulfitobacterium hafniense (strain Y51).